We begin with the raw amino-acid sequence, 232 residues long: Large ribosomal subunit protein uL1 (232 aa).

Belongs to the universal ribosomal protein uL1 family. In terms of assembly, part of the 50S ribosomal subunit.

Functionally, binds directly to 23S rRNA. The L1 stalk is quite mobile in the ribosome, and is involved in E site tRNA release. Protein L1 is also a translational repressor protein, it controls the translation of the L11 operon by binding to its mRNA. This chain is Large ribosomal subunit protein uL1, found in Burkholderia lata (strain ATCC 17760 / DSM 23089 / LMG 22485 / NCIMB 9086 / R18194 / 383).